A 173-amino-acid polypeptide reads, in one-letter code: Adenine phosphoribosyltransferase (173 aa).

It belongs to the purine/pyrimidine phosphoribosyltransferase family. As to quaternary structure, homodimer.

Its subcellular location is the cytoplasm. It catalyses the reaction AMP + diphosphate = 5-phospho-alpha-D-ribose 1-diphosphate + adenine. Its pathway is purine metabolism; AMP biosynthesis via salvage pathway; AMP from adenine: step 1/1. In terms of biological role, catalyzes a salvage reaction resulting in the formation of AMP, that is energically less costly than de novo synthesis. The polypeptide is Adenine phosphoribosyltransferase (Caldanaerobacter subterraneus subsp. tengcongensis (strain DSM 15242 / JCM 11007 / NBRC 100824 / MB4) (Thermoanaerobacter tengcongensis)).